Consider the following 239-residue polypeptide: Large ribosomal subunit protein uL1 (239 aa).

This sequence belongs to the universal ribosomal protein uL1 family. Part of the 50S ribosomal subunit.

Its function is as follows. Binds directly to 23S rRNA. The L1 stalk is quite mobile in the ribosome, and is involved in E site tRNA release. Protein L1 is also a translational repressor protein, it controls the translation of the L11 operon by binding to its mRNA. This is Large ribosomal subunit protein uL1 from Acidothermus cellulolyticus (strain ATCC 43068 / DSM 8971 / 11B).